Reading from the N-terminus, the 239-residue chain is MKRGKKYRAAAQLVDRTKLYSPLEAMRLAKQTNTMRVPATVEVAMRLGVDPRKADQMVRGTVNLPHGTGKTPRVLVFATAERAEEARAAGADYVGADELIEQVANGFLDFDAVVATPDLMGKVGRLGRILGPRGLMPNPKTGTVTNDVAKAVADIKSGKIEFRVDRQANLHLVIGKTDFTEQQLVENYAAALDEVLRLKPPTAKGRYLKKVTISTTMGPGIPVDPNRVRNLLAEETAAA.

This sequence belongs to the universal ribosomal protein uL1 family. As to quaternary structure, part of the 50S ribosomal subunit.

In terms of biological role, binds directly to 23S rRNA. The L1 stalk is quite mobile in the ribosome, and is involved in E site tRNA release. Functionally, protein L1 is also a translational repressor protein, it controls the translation of the L11 operon by binding to its mRNA. The protein is Large ribosomal subunit protein uL1 of Acidothermus cellulolyticus (strain ATCC 43068 / DSM 8971 / 11B).